Reading from the N-terminus, the 83-residue chain is Bublin coiled-coil protein (83 aa).

The segment at 1–24 (MSGPNGDLGMPVEAGAEGEEDGFG) is disordered. A coiled-coil region spans residues 25-74 (EAEYAAINSMLDQINSCLDHLEEKNDHLHARLQELLESNRQTRLEFQQQL). Serine 82 carries the post-translational modification Phosphoserine.

This sequence belongs to the UPF0184 (EST00098) family.

Its subcellular location is the cell junction. It localises to the cytoplasm. The protein resides in the cytoskeleton. Functionally, essential for intermediate filament organization in intestinal cells, interacts with intermediate filament and regulates intestinal lumen morphology. The protein is Bublin coiled-coil protein of Homo sapiens (Human).